Here is a 232-residue protein sequence, read N- to C-terminus: Small ribosomal subunit protein uS2 (232 aa).

This sequence belongs to the universal ribosomal protein uS2 family.

This is Small ribosomal subunit protein uS2 from Desulforamulus reducens (strain ATCC BAA-1160 / DSM 100696 / MI-1) (Desulfotomaculum reducens).